The chain runs to 406 residues: Phosphopentomutase (406 aa).

The Mn(2+) site is built by aspartate 10, aspartate 305, histidine 310, aspartate 346, histidine 347, and histidine 358.

This sequence belongs to the phosphopentomutase family. Mn(2+) is required as a cofactor.

Its subcellular location is the cytoplasm. The catalysed reaction is 2-deoxy-alpha-D-ribose 1-phosphate = 2-deoxy-D-ribose 5-phosphate. It carries out the reaction alpha-D-ribose 1-phosphate = D-ribose 5-phosphate. The protein operates within carbohydrate degradation; 2-deoxy-D-ribose 1-phosphate degradation; D-glyceraldehyde 3-phosphate and acetaldehyde from 2-deoxy-alpha-D-ribose 1-phosphate: step 1/2. Functionally, isomerase that catalyzes the conversion of deoxy-ribose 1-phosphate (dRib-1-P) and ribose 1-phosphate (Rib-1-P) to deoxy-ribose 5-phosphate (dRib-5-P) and ribose 5-phosphate (Rib-5-P), respectively. The protein is Phosphopentomutase of Methylorubrum extorquens (strain PA1) (Methylobacterium extorquens).